The chain runs to 444 residues: Probable glycine dehydrogenase (decarboxylating) subunit 1 (444 aa).

This sequence belongs to the GcvP family. N-terminal subunit subfamily. As to quaternary structure, the glycine cleavage system is composed of four proteins: P, T, L and H. In this organism, the P 'protein' is a heterodimer of two subunits.

The enzyme catalyses N(6)-[(R)-lipoyl]-L-lysyl-[glycine-cleavage complex H protein] + glycine + H(+) = N(6)-[(R)-S(8)-aminomethyldihydrolipoyl]-L-lysyl-[glycine-cleavage complex H protein] + CO2. In terms of biological role, the glycine cleavage system catalyzes the degradation of glycine. The P protein binds the alpha-amino group of glycine through its pyridoxal phosphate cofactor; CO(2) is released and the remaining methylamine moiety is then transferred to the lipoamide cofactor of the H protein. The chain is Probable glycine dehydrogenase (decarboxylating) subunit 1 from Chlorobaculum tepidum (strain ATCC 49652 / DSM 12025 / NBRC 103806 / TLS) (Chlorobium tepidum).